We begin with the raw amino-acid sequence, 36 residues long: MDSRLLVVLIPVLAAASWAVYNIGRVALQQFRKMTS.

The Lumenal segment spans residues 1–4; the sequence is MDSR. Residues 5-23 form a helical membrane-spanning segment; it reads LLVVLIPVLAAASWAVYNI. Topologically, residues 24-36 are stromal; it reads GRVALQQFRKMTS.

Belongs to the PsbY family. As to quaternary structure, PSII is composed of 1 copy each of membrane proteins PsbA, PsbB, PsbC, PsbD, PsbE, PsbF, PsbH, PsbI, PsbJ, PsbK, PsbL, PsbM, PsbT, PsbX, PsbY, PsbZ, Psb30/Ycf12, at least 3 peripheral proteins of the oxygen-evolving complex and a large number of cofactors. It forms dimeric complexes.

It is found in the plastid. Its subcellular location is the chloroplast thylakoid membrane. Loosely associated component of the core of photosystem II (PSII), it is not always seen in crystals. PSII is a light-driven water plastoquinone oxidoreductase, using light energy to abstract electrons from H(2)O, generating a proton gradient subsequently used for ATP formation. The polypeptide is Photosystem II reaction center protein Y (Pyropia yezoensis (Susabi-nori)).